We begin with the raw amino-acid sequence, 278 residues long: 2-dehydro-3-deoxyphosphooctonate aldolase (278 aa).

The protein belongs to the KdsA family.

Its subcellular location is the cytoplasm. It catalyses the reaction D-arabinose 5-phosphate + phosphoenolpyruvate + H2O = 3-deoxy-alpha-D-manno-2-octulosonate-8-phosphate + phosphate. It participates in carbohydrate biosynthesis; 3-deoxy-D-manno-octulosonate biosynthesis; 3-deoxy-D-manno-octulosonate from D-ribulose 5-phosphate: step 2/3. The protein operates within bacterial outer membrane biogenesis; lipopolysaccharide biosynthesis. The polypeptide is 2-dehydro-3-deoxyphosphooctonate aldolase (Dechloromonas aromatica (strain RCB)).